We begin with the raw amino-acid sequence, 379 residues long: F-box protein At5g18160 (379 aa).

A disordered region spans residues 1 to 26; sequence MDKQDEKKQGTTKSSSTLTTRCSHGN. The span at 11–26 shows a compositional bias: polar residues; the sequence is TTKSSSTLTTRCSHGN. Positions 28–74 constitute an F-box domain; it reads ISQSNSIPLDITIEILSRLPAKSIVRSRSVSKLWSSITTTPEFIKHR.

The sequence is that of F-box protein At5g18160 from Arabidopsis thaliana (Mouse-ear cress).